The sequence spans 393 residues: Protein shisa-9B (393 aa).

The first 20 residues, 1-20, serve as a signal peptide directing secretion; it reads MKSTGLLLGYFLMKVLVCDA. The Extracellular segment spans residues 21-131; it reads EGEPGKSLDG…MDQHDPTKDK (111 aa). Positions 28–52 are disordered; it reads LDGAVTASGSNDSRDGENGLSETPH. N-linked (GlcNAc...) asparagine glycosylation occurs at N38. A helical transmembrane segment spans residues 132–152; sequence TNLIVYIICGVVAIMALVGIF. At 153–393 the chain is on the cytoplasmic side; it reads TKLGLEKAHR…VTNSKTEVTV (241 aa). Residues 307–340 are disordered; it reads QKQNGHKSKSTKVHSSHPLAYGSNTIANPGRMSS. Positions 310–321 are enriched in basic residues; sequence NGHKSKSTKVHS.

The protein belongs to the shisa family. SHISA9 subfamily. Component of some AMPA receptors (ionotropic glutamate receptors) complex.

The protein resides in the cell projection. It is found in the dendritic spine membrane. Its subcellular location is the synapse. Regulator of short-term neuronal synaptic plasticity in the dentate gyrus. Associates with AMPA receptors (ionotropic glutamate receptors) in synaptic spines and promotes AMPA receptor desensitization at excitatory synapses. The polypeptide is Protein shisa-9B (shisa9b) (Danio rerio (Zebrafish)).